Consider the following 681-residue polypeptide: Sodium/glucose cotransporter 4 (681 aa).

At 1–36 the chain is on the extracellular side; that stretch reads MSKELAAMGPGASGDGVRTETAPHIALDSRVGLHAY. A helical transmembrane segment spans residues 37–57; that stretch reads DISVVVIYFVFVIAVGIWSSI. At 58-75 the chain is on the cytoplasmic side; the sequence is RASRGTIGGYFLAGRSMS. A helical transmembrane segment spans residues 76-98; sequence WWPIGASLMSSNVGSGLFIGLAG. Topologically, residues 99 to 114 are extracellular; the sequence is TGAAGGLAVGGFEWNA. A helical transmembrane segment spans residues 115–135; the sequence is TWLLLALGWVFVPVYIAAGVV. At 136–157 the chain is on the cytoplasmic side; that stretch reads TMPQYLKKRFGGQRIQVYMSVL. The helical transmembrane segment at 158–178 threads the bilayer; the sequence is SLILYIFTKISTDIFSGALFI. The Extracellular segment spans residues 179–190; the sequence is QMALGWNLYLST. The chain crosses the membrane as a helical span at residues 191 to 211; the sequence is GILLVVTAVYTIAGGLMAVIY. Over 212 to 217 the chain is Cytoplasmic; sequence TDALQT. A helical transmembrane segment spans residues 218-238; the sequence is VIMVGGALVLMFLGFQDVGWY. Over 239-275 the chain is Extracellular; sequence PGLEQRYRQAIPNVTVPNTTCHLPRPDAFHILRDPVS. N-linked (GlcNAc...) asparagine glycosylation is present at Asn251. A helical membrane pass occupies residues 276-296; that stretch reads GDIPWPGLIFGLTVLATWCWC. Topologically, residues 297–317 are cytoplasmic; that stretch reads TDQVIVQRSLSAKSLSHAKGG. The chain crosses the membrane as a helical span at residues 318-338; that stretch reads SVLGGYLKILPMFFIVMPGMI. Residues 339 to 383 are Extracellular-facing; sequence SRALFPDEVGCVDPDVCQRICGARVGCSNIAYPKLVMALMPVGLR. A helical membrane pass occupies residues 384–406; the sequence is GLMIAVIMAALMSSLTSIFNSSS. Residues 407–427 lie on the Cytoplasmic side of the membrane; it reads TLFTIDVWQRFRRKSTEQELM. The helical transmembrane segment at 428 to 448 threads the bilayer; it reads VVGRVFVVFLVVISILWIPII. The Extracellular portion of the chain corresponds to 449-459; the sequence is QSSNSGQLFDY. The chain crosses the membrane as a helical span at residues 460-480; sequence IQAVTSYLAPPITALFLLAIF. The Cytoplasmic portion of the chain corresponds to 481–487; that stretch reads CKRVTEP. The chain crosses the membrane as a helical span at residues 488-508; it reads GAFWGLVFGLGVGLLRMILEF. The Extracellular portion of the chain corresponds to 509 to 530; sequence SYPAPACGEVDRRPAVLKDFHY. A helical transmembrane segment spans residues 531–551; that stretch reads LYFAILLCGLTAIVIVIVSLC. Residues 552 to 660 are Cytoplasmic-facing; the sequence is TTPIPEEQLT…SIEEEPLWRH (109 aa). A compositionally biased stretch (basic and acidic residues) spans 579-591; it reads AHESTPEISERPA. Residues 579-614 are disordered; sequence AHESTPEISERPAGECPAGGGAAENSSLGQEQPEAP. 2 positions are modified to phosphoserine: Ser604 and Ser605. The helical transmembrane segment at 661-681 threads the bilayer; it reads VCNINAVLLLAINIFLWGYFA.

Belongs to the sodium:solute symporter (SSF) (TC 2.A.21) family. In terms of tissue distribution, expressed in the small intestine, kidney and liver.

It localises to the cell membrane. It carries out the reaction D-mannose(out) + n Na(+)(out) = D-mannose(in) + n Na(+)(in). In terms of biological role, electrogenic Na(+)-coupled sugar symporter that may play a primary role in D-mannose and possibly D-fructose and D-glucose transport at the plasma membrane. Transporter activity is driven by a transmembrane Na(+) electrochemical gradient set by the Na(+)/K(+) pump. Exclusively recognizes sugar substrates having a pyranose ring with an axial hydroxyl group on carbon 2. This is Sodium/glucose cotransporter 4 from Homo sapiens (Human).